The chain runs to 256 residues: Thiazole synthase (256 aa).

The active-site Schiff-base intermediate with DXP is lysine 95. 1-deoxy-D-xylulose 5-phosphate is bound by residues glycine 156, 182–183, and 204–205; these read AG and NT.

It belongs to the ThiG family. Homotetramer. Forms heterodimers with either ThiH or ThiS.

The protein resides in the cytoplasm. The catalysed reaction is [ThiS sulfur-carrier protein]-C-terminal-Gly-aminoethanethioate + 2-iminoacetate + 1-deoxy-D-xylulose 5-phosphate = [ThiS sulfur-carrier protein]-C-terminal Gly-Gly + 2-[(2R,5Z)-2-carboxy-4-methylthiazol-5(2H)-ylidene]ethyl phosphate + 2 H2O + H(+). Its pathway is cofactor biosynthesis; thiamine diphosphate biosynthesis. Its function is as follows. Catalyzes the rearrangement of 1-deoxy-D-xylulose 5-phosphate (DXP) to produce the thiazole phosphate moiety of thiamine. Sulfur is provided by the thiocarboxylate moiety of the carrier protein ThiS. In vitro, sulfur can be provided by H(2)S. This Salmonella schwarzengrund (strain CVM19633) protein is Thiazole synthase.